We begin with the raw amino-acid sequence, 252 residues long: Pimeloyl-[acyl-carrier protein] methyl ester esterase (252 aa).

The AB hydrolase-1 domain maps to 15–239 (LVMLHGWAMH…FPHCGHAPFL (225 aa)). Residues tryptophan 21, 81 to 82 (SL), and 143 to 147 (FLTLQ) contribute to the substrate site. Serine 81 serves as the catalytic Nucleophile. Residues aspartate 207 and histidine 235 contribute to the active site. Histidine 235 is a binding site for substrate.

This sequence belongs to the AB hydrolase superfamily. Carboxylesterase BioH family. In terms of assembly, monomer.

The protein localises to the cytoplasm. It catalyses the reaction 6-carboxyhexanoyl-[ACP] methyl ester + H2O = 6-carboxyhexanoyl-[ACP] + methanol + H(+). It functions in the pathway cofactor biosynthesis; biotin biosynthesis. In terms of biological role, the physiological role of BioH is to remove the methyl group introduced by BioC when the pimeloyl moiety is complete. It allows to synthesize pimeloyl-ACP via the fatty acid synthetic pathway through the hydrolysis of the ester bonds of pimeloyl-ACP esters. In Nitrosomonas europaea (strain ATCC 19718 / CIP 103999 / KCTC 2705 / NBRC 14298), this protein is Pimeloyl-[acyl-carrier protein] methyl ester esterase.